A 157-amino-acid polypeptide reads, in one-letter code: Snaclec EMS16 subunit alpha (157 aa).

The signal sequence occupies residues 1–23 (MGRFISVSFGLLVVFLSLSGTGA). 3 disulfide bridges follow: C27–C38, C55–C152, and C127–C144. One can recognise a C-type lectin domain in the interval 34-153 (YDQHCYLAIG…CEDLYPFVCK (120 aa)).

It belongs to the snaclec family. In terms of assembly, heterodimer of subunits A and B; disulfide-linked. As to expression, expressed by the venom gland.

The protein resides in the secreted. In terms of biological role, EMS16 is a potent and selective inhibitor of alpha-2/beta-1 (ITGA2/ITGB1) integrin and acts as a potent antagonist of platelet aggregation and cell migration. Binds specifically to the I domain of the alpha-2 subunit, in a metal ion-independent fashion. This Echis multisquamatus (Central Asian sand viper) protein is Snaclec EMS16 subunit alpha.